Consider the following 139-residue polypeptide: Large ribosomal subunit protein uL16 (139 aa).

Residues 1 to 21 (MLMPKRVQYRKTQRGRMKGNA) form a disordered region. Over residues 7–17 (VQYRKTQRGRM) the composition is skewed to basic residues.

It belongs to the universal ribosomal protein uL16 family. Part of the 50S ribosomal subunit.

Its function is as follows. Binds 23S rRNA and is also seen to make contacts with the A and possibly P site tRNAs. The chain is Large ribosomal subunit protein uL16 from Chlorobaculum tepidum (strain ATCC 49652 / DSM 12025 / NBRC 103806 / TLS) (Chlorobium tepidum).